A 589-amino-acid polypeptide reads, in one-letter code: GTPase LSG1-2 (589 aa).

The interval 1–26 (MGKSEKTSLGRSLVKHHNHMIQESKD) is disordered. The CP-type G domain maps to 158–366 (WRQLWRVLER…LCDCPGLVFP (209 aa)). Positions 176-180 (DARDP) match the DARXP motif motif. The G4 stretch occupies residues 206–209 (NKAD). 206–209 (NKAD) is a binding site for GTP. The tract at residues 237-239 (AAT) is G5. Residues 315–322 (GYPNVGKS) form a G1 region. A GTP-binding site is contributed by 318–323 (NVGKSS). The interval 341–345 (GKTKH) is G2. The segment at 359 to 362 (DCPG) is G3. Residue Gly-362 participates in GTP binding. Residues 495-509 (GSESDDSAVGDETEN) show a composition bias toward acidic residues. 2 disordered regions span residues 495 to 515 (GSES…VPGI) and 534 to 589 (SKKV…LTMR). The Nuclear localization signal signature appears at 534-541 (SKKVTAKK). Basic residues predominate over residues 534 to 558 (SKKVTAKKQTASHKQHKKPQRKKDR). Residues 580–589 (PANTGPLTMR) show a composition bias toward polar residues.

This sequence belongs to the TRAFAC class YlqF/YawG GTPase family. As to expression, ubiquitous, with the highest expression in reproductive and strongly dividing tissues.

Its subcellular location is the cytoplasm. It localises to the nucleus. In terms of biological role, GTPase involved in ribosome biogenesis. Binds to 23S rRNA and associates with 60S pre-ribosomes. Involved in early cotyledon and leaf development. This is GTPase LSG1-2 from Arabidopsis thaliana (Mouse-ear cress).